Consider the following 244-residue polypeptide: Tetraspanin-7 (244 aa).

The Cytoplasmic segment spans residues 1–11 (METKPVITCLK). The helical transmembrane segment at 12–35 (TLLIIYSFVFWITGVILLAVGVWG) threads the bilayer. Over 36 to 51 (KLTLGTYISLIAENST) the chain is Extracellular. The N-linked (GlcNAc...) asparagine glycan is linked to asparagine 49. The chain crosses the membrane as a helical span at residues 52–70 (NAPYVLIGTGTTIVVFGLF). Topologically, residues 71 to 81 (GCFATCRGSPW) are cytoplasmic. Residues 82–107 (MLKLYAMFLSLVFLAELVAGISGFVF) traverse the membrane as a helical segment. Residues 108–208 (RHEIKDTFLR…LVTSFMETNM (101 aa)) are Extracellular-facing. N-linked (GlcNAc...) asparagine glycosylation is found at asparagine 150, asparagine 153, asparagine 172, and asparagine 183. Residues 209–229 (GIIAGVAFGIAFSQLIGMLLA) form a helical membrane-spanning segment. The Cytoplasmic portion of the chain corresponds to 230–244 (CCLSRFITANQYEMV).

It belongs to the tetraspanin (TM4SF) family.

Its subcellular location is the membrane. Functionally, may be involved in cell proliferation and cell motility. The sequence is that of Tetraspanin-7 (TSPAN7) from Pongo pygmaeus (Bornean orangutan).